Here is a 4367-residue protein sequence, read N- to C-terminus: Dynein heavy chain, cytoplasmic (4367 aa).

A compositionally biased stretch (pro residues) spans 1-13 (MMDSVPSPPPQPS). The segment at 1–20 (MMDSVPSPPPQPSPDANGVA) is disordered. Residues 1-1904 (MMDSVPSPPP…HIKMANAKLN (1904 aa)) are stem. 5 coiled-coil regions span residues 676–693 (ARQI…VEQV), 1176–1215 (IKFA…EAVR), 1327–1351 (LTHF…KEAL), 1557–1574 (YKEF…LNRV), and 1637–1668 (NIPN…KERV). AAA stretches follow at residues 1905–2130 (YGFE…VLVS), 2202–2460 (EAIR…FTVA), 2566–2815 (EVNT…WVRG), and 2909–3179 (TFCE…QGKI). An ATP-binding site is contributed by 1943–1950 (GPAGTGKT). Residues 2195–2218 (ASLEKLQEAIRRLAAERQLVVNDI) are a coiled coil. Residues 2240 to 2247 (GNSGSGKS), 2605 to 2612 (GPPGSGKT), and 2947 to 2954 (GVSGSGKT) each bind ATP. Coiled-coil stretches lie at residues 3193 to 3296 (QYVK…LARA), 3423 to 3481 (PLRE…SRVQ), and 3778 to 3809 (VIET…VEQI). Residues 3193-3481 (QYVKLYNEKR…AIKAEMSRVQ (289 aa)) are stalk. AAA regions lie at residues 3565–3794 (LSTA…EISA) and 4003–4215 (AERF…VIDT).

Belongs to the dynein heavy chain family. In terms of assembly, consists of at least two heavy chains and a number of intermediate and light chains.

The protein resides in the cytoplasm. It localises to the cytoskeleton. In terms of biological role, cytoplasmic dynein acts as a motor for the intracellular retrograde motility of vesicles and organelles along microtubules. Dynein has ATPase activity; the force-producing power stroke is thought to occur on release of ADP. Required to maintain uniform nuclear distribution in hyphae. The polypeptide is Dynein heavy chain, cytoplasmic (ro-1) (Neurospora crassa (strain ATCC 24698 / 74-OR23-1A / CBS 708.71 / DSM 1257 / FGSC 987)).